We begin with the raw amino-acid sequence, 542 residues long: Zinc finger CCHC domain-containing protein 7 (542 aa).

The tract at residues 110–144 (QAQEKTQSPATPRSNKVANKCKRSNKKPEPEESPS) is disordered. The segment covering 112–126 (QEKTQSPATPRSNKV) has biased composition (polar residues). Residues lysine 129 and lysine 136 each participate in a glycyl lysine isopeptide (Lys-Gly) (interchain with G-Cter in SUMO2) cross-link. A Phosphoserine modification is found at serine 142. Residues lysine 236 and lysine 251 each participate in a glycyl lysine isopeptide (Lys-Gly) (interchain with G-Cter in SUMO2) cross-link. 3 CCHC-type zinc fingers span residues 238–255 (VTCR…NCPL), 260–277 (RPCC…GCPA), and 301–318 (KRCD…ACPE). Residue lysine 336 forms a Glycyl lysine isopeptide (Lys-Gly) (interchain with G-Cter in SUMO2) linkage. The CCHC-type 4 zinc finger occupies 345 to 362 (VYCYNCAQKGHYGHECTE). The disordered stretch occupies residues 396-542 (LKDIKKNGDF…RKKKPKSSGF (147 aa)). Residue lysine 410 forms a Glycyl lysine isopeptide (Lys-Gly) (interchain with G-Cter in SUMO2) linkage. The span at 412–421 (PHGEETDRYH) shows a compositional bias: basic and acidic residues. The span at 422–435 (HDRRKSRFSGKRSR) shows a compositional bias: basic residues. Residue lysine 432 forms a Glycyl lysine isopeptide (Lys-Gly) (interchain with G-Cter in SUMO2) linkage. Basic and acidic residues predominate over residues 436 to 456 (WPRESKETQKEKTRGREGEKH). Lysine 474 is covalently cross-linked (Glycyl lysine isopeptide (Lys-Gly) (interchain with G-Cter in SUMO2)). Residues 474 to 489 (KPNSSSSSNSQKPSKS) are compositionally biased toward low complexity. A phosphoserine mark is found at serine 478 and serine 480. Residues lysine 485 and lysine 488 each participate in a glycyl lysine isopeptide (Lys-Gly) (interchain with G-Cter in SUMO2) cross-link. 2 stretches are compositionally biased toward basic and acidic residues: residues 499–510 (LREEKLRRESMR) and 518–528 (FVEDGSHDDLF). Residue lysine 531 forms a Glycyl lysine isopeptide (Lys-Gly) (interchain with G-Cter in SUMO2) linkage. The segment covering 531-542 (KQRKKKPKSSGF) has biased composition (basic residues).

As to quaternary structure, component of a nucleolar TRAMP-like complex, an ATP-dependent exosome regulatory complex consisting of a helicase (MTREX), an oligadenylate polymerase (TENT4B or TENT4A), and a substrate specific RNA-binding factor (ZCCHC7 or ZCCHC8). Several TRAMP-like complexes exist with specific compositions and are associated with nuclear, or nucleolar RNA exosomes.

It is found in the nucleus. Its subcellular location is the nucleolus. In Rattus norvegicus (Rat), this protein is Zinc finger CCHC domain-containing protein 7 (Zcchc7).